The following is a 106-amino-acid chain: ATP-dependent Clp protease adapter protein ClpS (106 aa).

The protein belongs to the ClpS family. In terms of assembly, binds to the N-terminal domain of the chaperone ClpA.

In terms of biological role, involved in the modulation of the specificity of the ClpAP-mediated ATP-dependent protein degradation. The polypeptide is ATP-dependent Clp protease adapter protein ClpS (Nocardia farcinica (strain IFM 10152)).